The sequence spans 239 residues: Serine protease SplC (239 aa).

Residues 1 to 36 form the signal peptide; it reads MNKNIVIKSMAALAILTSATGINAAVVEETQQIANA. Residues His-75, Asp-113, and Ser-193 each act as charge relay system in the active site.

Belongs to the peptidase S1B family.

Its subcellular location is the secreted. The polypeptide is Serine protease SplC (splC) (Staphylococcus aureus (strain MSSA476)).